A 124-amino-acid polypeptide reads, in one-letter code: Small ribosomal subunit protein uS12 (124 aa).

A 3-methylthioaspartic acid modification is found at Asp-89.

It belongs to the universal ribosomal protein uS12 family. Part of the 30S ribosomal subunit. Contacts proteins S8 and S17. May interact with IF1 in the 30S initiation complex.

Its function is as follows. With S4 and S5 plays an important role in translational accuracy. Interacts with and stabilizes bases of the 16S rRNA that are involved in tRNA selection in the A site and with the mRNA backbone. Located at the interface of the 30S and 50S subunits, it traverses the body of the 30S subunit contacting proteins on the other side and probably holding the rRNA structure together. The combined cluster of proteins S8, S12 and S17 appears to hold together the shoulder and platform of the 30S subunit. In Shewanella frigidimarina (strain NCIMB 400), this protein is Small ribosomal subunit protein uS12.